The sequence spans 349 residues: MSILFHAYPLARPALFAMDAETAHEVTLAQLQRAYDCGLTRKLLHAQPEAPATLMGLSLRNPVGLAAGLDKNGAHIDALGNLGFGFVEVGTVTPRAQPGNPKPRMFRLPRANALINRLGFNNQGLDAFIANVQRSQWRSQGRILGLNIGKNADTPIERAAEDYLIGLAGVYPHADYVTVNISSPNTKNLRALQGGDELSALLGQLQERRLALADQHQRHVPLAVKIAPDLSDDQIDAIAEILPRHGIDGVIATNTTLARDAVQGLPHAEEAGGVSGAPVHELSLRVIERLRSRLGDAVAIIGVGGILSGRQASEKMAAGAQAVQLYTGLIYRGPALVGECVRALAQGSR.

Residues 67–71 (AGLDK) and Thr91 each bind FMN. Residue Lys71 coordinates substrate. A substrate-binding site is contributed by 116–120 (NRLGF). Residues Asn147 and Asn180 each coordinate FMN. Residue Asn180 coordinates substrate. Ser183 serves as the catalytic Nucleophile. Asn185 contributes to the substrate binding site. The FMN site is built by Lys225 and Thr253. 254 to 255 (NT) serves as a coordination point for substrate. FMN contacts are provided by residues Gly276, Gly305, and 326-327 (YT).

It belongs to the dihydroorotate dehydrogenase family. Type 2 subfamily. As to quaternary structure, monomer. FMN serves as cofactor.

Its subcellular location is the cell membrane. It carries out the reaction (S)-dihydroorotate + a quinone = orotate + a quinol. It participates in pyrimidine metabolism; UMP biosynthesis via de novo pathway; orotate from (S)-dihydroorotate (quinone route): step 1/1. In terms of biological role, catalyzes the conversion of dihydroorotate to orotate with quinone as electron acceptor. The protein is Dihydroorotate dehydrogenase (quinone) of Bordetella pertussis (strain Tohama I / ATCC BAA-589 / NCTC 13251).